Consider the following 196-residue polypeptide: Probable malonic semialdehyde reductase RutE (196 aa).

It belongs to the nitroreductase family. HadB/RutE subfamily. It depends on FMN as a cofactor.

It carries out the reaction 3-hydroxypropanoate + NADP(+) = 3-oxopropanoate + NADPH + H(+). May reduce toxic product malonic semialdehyde to 3-hydroxypropionic acid, which is excreted. This Cronobacter sakazakii (strain ATCC BAA-894) (Enterobacter sakazakii) protein is Probable malonic semialdehyde reductase RutE.